A 250-amino-acid polypeptide reads, in one-letter code: Urease accessory protein UreF (250 aa).

The interval 1 to 21 (MDEADPGEAEAAQAEAAQDGA) is disordered. The segment covering 9–21 (AEAAQAEAAQDGA) has biased composition (low complexity).

It belongs to the UreF family. UreD, UreF and UreG form a complex that acts as a GTP-hydrolysis-dependent molecular chaperone, activating the urease apoprotein by helping to assemble the nickel containing metallocenter of UreC. The UreE protein probably delivers the nickel.

The protein resides in the cytoplasm. In terms of biological role, required for maturation of urease via the functional incorporation of the urease nickel metallocenter. The sequence is that of Urease accessory protein UreF from Methylobacterium sp. (strain 4-46).